A 199-amino-acid polypeptide reads, in one-letter code: Adenylyl-sulfate kinase (199 aa).

The disordered stretch occupies residues 1-21 (MSQSSNITWHDSEVTKSDRQQ). The span at 10–19 (HDSEVTKSDR) shows a compositional bias: basic and acidic residues. 34–41 (GLSGSGKS) lines the ATP pocket. The active-site Phosphoserine intermediate is S108.

Belongs to the APS kinase family.

The catalysed reaction is adenosine 5'-phosphosulfate + ATP = 3'-phosphoadenylyl sulfate + ADP + H(+). It participates in sulfur metabolism; hydrogen sulfide biosynthesis; sulfite from sulfate: step 2/3. Functionally, catalyzes the synthesis of activated sulfate. The sequence is that of Adenylyl-sulfate kinase from Staphylococcus haemolyticus (strain JCSC1435).